A 230-amino-acid chain; its full sequence is Transcription factor bHLH147 (230 aa).

Polar residues predominate over residues 1–17 (MESISPVSNQLLQPTTT). Residues 1-52 (MESISPVSNQLLQPTTTSSNSDRSRRKRKKKSSPSSVEKSPSPSISLEKWRS) form a disordered region. The segment covering 33 to 46 (SPSSVEKSPSPSIS) has biased composition (low complexity). A bHLH domain is found at 147–196 (KQRATVLRLKAKGLPAVQRKVKVLSRLVPGCRKQSLPVVLEETTDYIAAM). Positions 210–230 (VSSSPPPPTPGHEGGQTHMLG) are disordered.

As to quaternary structure, homodimer. Interacts with PRE3.

It localises to the nucleus. Functionally, atypical bHLH transcription factor probably unable to bind DNA. Negatively regulates brassinosteroid signaling. In Arabidopsis thaliana (Mouse-ear cress), this protein is Transcription factor bHLH147 (BHLH147).